The chain runs to 526 residues: Phosphoenolpyruvate carboxylase (526 aa).

The protein belongs to the PEPCase type 2 family. In terms of assembly, homotetramer. Requires Mg(2+) as cofactor.

It carries out the reaction oxaloacetate + phosphate = phosphoenolpyruvate + hydrogencarbonate. Its function is as follows. Catalyzes the irreversible beta-carboxylation of phosphoenolpyruvate (PEP) to form oxaloacetate (OAA), a four-carbon dicarboxylic acid source for the tricarboxylic acid cycle. This is Phosphoenolpyruvate carboxylase from Methanosarcina barkeri (strain Fusaro / DSM 804).